Reading from the N-terminus, the 411-residue chain is Serine--tRNA ligase (411 aa).

226–228 (TSE) serves as a coordination point for L-serine. 257–259 (RKE) serves as a coordination point for ATP. Glu-280 lines the L-serine pocket. 344–347 (EISS) is a binding site for ATP. Ser-379 lines the L-serine pocket.

The protein belongs to the class-II aminoacyl-tRNA synthetase family. Type-1 seryl-tRNA synthetase subfamily. Homodimer. The tRNA molecule binds across the dimer.

Its subcellular location is the cytoplasm. The catalysed reaction is tRNA(Ser) + L-serine + ATP = L-seryl-tRNA(Ser) + AMP + diphosphate + H(+). The enzyme catalyses tRNA(Sec) + L-serine + ATP = L-seryl-tRNA(Sec) + AMP + diphosphate + H(+). The protein operates within aminoacyl-tRNA biosynthesis; selenocysteinyl-tRNA(Sec) biosynthesis; L-seryl-tRNA(Sec) from L-serine and tRNA(Sec): step 1/1. Its function is as follows. Catalyzes the attachment of serine to tRNA(Ser). Is also able to aminoacylate tRNA(Sec) with serine, to form the misacylated tRNA L-seryl-tRNA(Sec), which will be further converted into selenocysteinyl-tRNA(Sec). The polypeptide is Serine--tRNA ligase (Campylobacter jejuni subsp. jejuni serotype O:6 (strain 81116 / NCTC 11828)).